Consider the following 422-residue polypeptide: Serine protease HTRA2, mitochondrial (422 aa).

A mitochondrion-targeting transit peptide spans 1–17; it reads MALRGSHRLEVIFKRCI. Residues 18–74 constitute a propeptide that is removed on maturation; sequence ASPVLHSQAGNRRSSQLAIKGVDPNSNGNSGQYQQNGEHKEKGWRRLVRFFVPFSLG. The tract at residues 28–55 is disordered; that stretch reads NRRSSQLAIKGVDPNSNGNSGQYQQNGE. A compositionally biased stretch (low complexity) spans 42-53; it reads NSNGNSGQYQQN. The helical transmembrane segment at 64–82 threads the bilayer; the sequence is LVRFFVPFSLGAAVSAAII. Short sequence motifs (IAP-binding) lie at residues 75 to 78 and 94 to 97; these read AAVS and SKMT. The segment at 139 to 302 is serine protease; that stretch reads SNGSGFIIEQ…IPIDYVKVFL (164 aa). Residues His-157, Asp-189, and Ser-266 each act as charge relay system in the active site. Positions 325–410 constitute a PDZ domain; sequence MGITMLTLTP…TLDIVILRGV (86 aa).

Belongs to the peptidase S1C family. In terms of assembly, interacts with th/DIAP1 (via BIR 2 domain).

It is found in the mitochondrion intermembrane space. The protein resides in the mitochondrion membrane. It catalyses the reaction Cleavage of non-polar aliphatic amino-acids at the P1 position, with a preference for Val, Ile and Met. At the P2 and P3 positions, Arg is selected most strongly with a secondary preference for other hydrophilic residues.. Functionally, serine protease that shows proteolytic activity against a non-specific substrate beta-casein. Promotes or induces cell death either by direct binding to and inhibition of BIRC proteins (also called inhibitor of apoptosis proteins, IAPs), leading to an increase in caspase activity, or by a BIRC inhibition-independent, caspase-independent and serine protease activity-dependent mechanism. Can antagonize antiapoptotic activity of th/Diap1 by directly inducing the degradation of th/Diap1. The polypeptide is Serine protease HTRA2, mitochondrial (Drosophila sechellia (Fruit fly)).